Reading from the N-terminus, the 400-residue chain is Imidazolonepropionase (400 aa).

Residues H68 and H70 each contribute to the Fe(3+) site. Zn(2+)-binding residues include H68 and H70. 4-imidazolone-5-propanoate-binding residues include R77, Y140, and H173. Y140 is a binding site for N-formimidoyl-L-glutamate. H238 lines the Fe(3+) pocket. Residue H238 coordinates Zn(2+). A 4-imidazolone-5-propanoate-binding site is contributed by Q241. A Fe(3+)-binding site is contributed by D313. Position 313 (D313) interacts with Zn(2+). Residues N315 and G317 each coordinate N-formimidoyl-L-glutamate. T318 is a binding site for 4-imidazolone-5-propanoate.

This sequence belongs to the metallo-dependent hydrolases superfamily. HutI family. Zn(2+) serves as cofactor. Requires Fe(3+) as cofactor.

The protein localises to the cytoplasm. The enzyme catalyses 4-imidazolone-5-propanoate + H2O = N-formimidoyl-L-glutamate. The protein operates within amino-acid degradation; L-histidine degradation into L-glutamate; N-formimidoyl-L-glutamate from L-histidine: step 3/3. Its function is as follows. Catalyzes the hydrolytic cleavage of the carbon-nitrogen bond in imidazolone-5-propanoate to yield N-formimidoyl-L-glutamate. It is the third step in the universal histidine degradation pathway. This chain is Imidazolonepropionase, found in Paracoccus denitrificans (strain Pd 1222).